Consider the following 1747-residue polypeptide: Retroelement silencing factor 1 (1747 aa).

Residue Lys-216 forms a Glycyl lysine isopeptide (Lys-Gly) (interchain with G-Cter in SUMO2) linkage. The residue at position 221 (Ser-221) is a Phosphoserine. Positions 261-272 (TSAVPSQQYATQ) are enriched in polar residues. Residues 261–280 (TSAVPSQQYATQTDKRPPPP) are disordered. Lys-707 participates in a covalent cross-link: Glycyl lysine isopeptide (Lys-Gly) (interchain with G-Cter in SUMO2). 3 disordered regions span residues 833–856 (PLTQ…NVNQ), 923–956 (PQKP…GFQK), and 1073–1101 (EGSV…KDPA). The span at 842–856 (ESTNGNSEVTPNVNQ) shows a compositional bias: polar residues. Positions 937 to 956 (REPEKQLDNTTENKDFGFQK) are enriched in basic and acidic residues. Over residues 1073–1087 (EGSVGQQTTYQTSED) the composition is skewed to polar residues. Basic and acidic residues predominate over residues 1089-1101 (TADKTSSDSKDPA). A Glycyl lysine isopeptide (Lys-Gly) (interchain with G-Cter in SUMO2) cross-link involves residue Lys-1136. Ser-1145 bears the Phosphoserine mark. Residues 1200–1274 (EEKQKEQCSP…KSLPRTEQEL (75 aa)) are disordered. The span at 1217–1226 (QGERTSDRDV) shows a compositional bias: basic and acidic residues. At Thr-1240 the chain carries Phosphothreonine. Positions 1242–1261 (PDGKSHFPELQDDSRKDTPK) are enriched in basic and acidic residues. Ser-1358 carries the phosphoserine modification. Glycyl lysine isopeptide (Lys-Gly) (interchain with G-Cter in SUMO2) cross-links involve residues Lys-1528 and Lys-1636. The tract at residues 1686–1716 (KRTQKDSQERDNVNSRLSKRSFSADGFEMLQ) is disordered. Positions 1689 to 1698 (QKDSQERDNV) are enriched in basic and acidic residues. Ser-1708 bears the Phosphoserine mark. Residue Lys-1723 forms a Glycyl lysine isopeptide (Lys-Gly) (interchain with G-Cter in SUMO2) linkage. A Phosphoserine modification is found at Ser-1740.

As to quaternary structure, interacts with SETDB1.

It localises to the nucleus. In terms of biological role, plays a role in the regulation of imprinted gene expression, regulates repressive epigenetic modifications associated with SETDB1. Required for the recruitment or accumulation of SETDB1 to the endogenous retroviruses (ERVs) and maintenance of repressive chromatin configuration, contributing to a subset of the SETDB1-dependent ERV silencing in embryonic stem cells. The protein is Retroelement silencing factor 1 of Homo sapiens (Human).